We begin with the raw amino-acid sequence, 538 residues long: Dolichol kinase (538 aa).

At 1 to 13 (MTRECPSPAPGPG) the chain is on the lumenal side. The chain crosses the membrane as a helical span at residues 14–34 (APLSGSVLAEAAVVFAVVLSI). The Cytoplasmic portion of the chain corresponds to 35-74 (HATVWDRYSWCAVALAVQAFYVQYKWDRLLQQGSAVFQFR). Residues 75–95 (MSANSGLLPASMVMPLLGLVM) form a helical membrane-spanning segment. The Lumenal portion of the chain corresponds to 96–111 (KERCQTAGNPFFERFG). A helical membrane pass occupies residues 112–132 (IVVAATGMAVALFSSVLALGI). Residues 133–134 (TR) are Cytoplasmic-facing. Residues 135 to 155 (PVPTNTCVILGLAGGVIIYIM) form a helical membrane-spanning segment. Topologically, residues 156 to 163 (KHSLSVGE) are lumenal. Residues 164–184 (VIEVLEVLLIFVYLNMILLYL) form a helical membrane-spanning segment. The Cytoplasmic portion of the chain corresponds to 185 to 188 (LPRC). Residues 189–209 (FTPGEALLVLGGISFVLNQLI) form a helical membrane-spanning segment. The Lumenal portion of the chain corresponds to 210–224 (KRSLTLVESQGDPVD). The helical transmembrane segment at 225-245 (FFLLVVVVGMVLMGIFFSTLF) threads the bilayer. The Cytoplasmic portion of the chain corresponds to 246 to 254 (VFMDSGTWA). The chain crosses the membrane as a helical span at residues 255–275 (SSIFFHLMTCVLSLGVVLPWL). Over 276–297 (HRLIRRNPLLWLLQFLFQTDTR) the chain is Lumenal. The chain crosses the membrane as a helical span at residues 298–318 (IYLLAYWSLLATLACLVVLYQ). Topologically, residues 319 to 337 (NAKRSSSESKKHQAPTIAR) are cytoplasmic. Residues 338–354 (KYFHLIVVATYIPGIIF) form a helical membrane-spanning segment. Over 355-359 (DRPLL) the chain is Lumenal. A helical transmembrane segment spans residues 360-380 (YVAATVCLAVFIFLEYVRYFR). Over 381–401 (IKPLGHTLRSFLSLFLDERDS) the chain is Cytoplasmic. The chain crosses the membrane as a helical span at residues 402-422 (GPLILTHIYLLLGMSLPIWLI). Over 423-436 (PRPCTQKGSLGGAR) the chain is Lumenal. A helical transmembrane segment spans residues 437–457 (ALVPYAGVLAVGVGDTVASIF). The Cytoplasmic portion of the chain corresponds to 458 to 472 (GSTMGEIRWPGTKKT). Positions 459-474 (STMGEIRWPGTKKTFE) are CTP-binding. A helical transmembrane segment spans residues 473 to 493 (FEGTMTSIFAQIISVALILIF). Residues 494-495 (DS) lie on the Lumenal side of the membrane. Residues 496 to 516 (GVDLNYSYAWILGSISTVSLL) form a helical membrane-spanning segment. Residues 517-538 (EAYTTQIDNLLLPLYLLILLMA) lie on the Cytoplasmic side of the membrane.

This sequence belongs to the polyprenol kinase family. Ubiquitous.

It is found in the endoplasmic reticulum membrane. The catalysed reaction is a di-trans,poly-cis-dolichol + CTP = a di-trans,poly-cis-dolichyl phosphate + CDP + H(+). It functions in the pathway protein modification; protein glycosylation. In terms of biological role, catalyzes CTP-mediated phosphorylation of dolichol, the terminal step in de novo dolichyl monophosphate (Dol-P) biosynthesis. Dol-P is a lipid carrier essential for the synthesis of N-linked and O-linked oligosaccharides and for GPI anchors. The protein is Dolichol kinase (DOLK) of Homo sapiens (Human).